Reading from the N-terminus, the 61-residue chain is Probable tautomerase BA_5626/GBAA_5626/BAS5226 (61 aa).

The active-site Proton acceptor; via imino nitrogen is the Pro-2.

The protein belongs to the 4-oxalocrotonate tautomerase family.

This chain is Probable tautomerase BA_5626/GBAA_5626/BAS5226, found in Bacillus anthracis.